The chain runs to 371 residues: Methionine import ATP-binding protein MetN (371 aa).

One can recognise an ABC transporter domain in the interval 29–270 (IRIEGVRKVY…PRHEVTRRFV (242 aa)). 67 to 74 (GRSGAGKS) is a binding site for ATP.

Belongs to the ABC transporter superfamily. Methionine importer (TC 3.A.1.24) family. As to quaternary structure, the complex is composed of two ATP-binding proteins (MetN), two transmembrane proteins (MetI) and a solute-binding protein (MetQ).

Its subcellular location is the cell inner membrane. It catalyses the reaction L-methionine(out) + ATP + H2O = L-methionine(in) + ADP + phosphate + H(+). It carries out the reaction D-methionine(out) + ATP + H2O = D-methionine(in) + ADP + phosphate + H(+). Part of the ABC transporter complex MetNIQ involved in methionine import. Responsible for energy coupling to the transport system. This chain is Methionine import ATP-binding protein MetN, found in Rhodopseudomonas palustris (strain BisA53).